Reading from the N-terminus, the 292-residue chain is Tetratricopeptide repeat protein 1 (292 aa).

The interval 23–125 (TQEAECAGPP…STRLKEEGNE (103 aa)) is disordered. 2 stretches are compositionally biased toward basic and acidic residues: residues 45-55 (LLRDDEAHLQE) and 75-85 (GADKVENKSNE). Phosphoserine is present on residues Ser83 and Ser90. Residues 99–125 (ELEKNMSDEEKQKRREESTRLKEEGNE) show a composition bias toward basic and acidic residues. 3 TPR repeats span residues 116–149 (STRLKEEGNEQFKKGDYIEAESSYSRALEMCPSC), 155–188 (SILFSNRAAARMKQDKKEMAINDCSKAIQLNPSY), and 189–222 (IRAILRRAELYEKTDKLDEALEDYKSILEKDPSI).

In terms of assembly, interacts with the GAP domain of NF1. Interacts (via TPR repeats) with HSP90AA1 and HSPA8.

The chain is Tetratricopeptide repeat protein 1 (TTC1) from Homo sapiens (Human).